Consider the following 336-residue polypeptide: Fructose-1,6-bisphosphatase class 1 (336 aa).

Residues E90, D112, L114, and D115 each coordinate Mg(2+). Substrate contacts are provided by residues 115 to 118, N207, and K273; that span reads DGSS. E279 is a binding site for Mg(2+).

Belongs to the FBPase class 1 family. In terms of assembly, homotetramer. Mg(2+) serves as cofactor.

Its subcellular location is the cytoplasm. It catalyses the reaction beta-D-fructose 1,6-bisphosphate + H2O = beta-D-fructose 6-phosphate + phosphate. It participates in carbohydrate biosynthesis; gluconeogenesis. In Xanthomonas axonopodis pv. citri (strain 306), this protein is Fructose-1,6-bisphosphatase class 1.